A 629-amino-acid polypeptide reads, in one-letter code: Kelch-like protein 13 (629 aa).

Positions 66–135 constitute a BTB domain; sequence CDVTLVPGDG…IYTAKLSLNM (70 aa). Residues 170–271 form the BACK domain; the sequence is CVEVGRIANT…TPQDLINYVQ (102 aa). Kelch repeat units lie at residues 315–363, 364–415, 416–462, 464–509, 511–561, and 562–610; these read HLVT…VIGN, FLYV…ALKG, HLYA…VYGG, MYIS…TVGD, LYVI…VFEN, and KIYV…TLTV.

In terms of assembly, component of the BCR(KLHL9-KLHL13) E3 ubiquitin ligase complex, at least composed of CUL3, KLHL9, KLHL13 and RBX1. Interacts with AURKB.

The protein operates within protein modification; protein ubiquitination. Functionally, substrate-specific adapter of a BCR (BTB-CUL3-RBX1) E3 ubiquitin-protein ligase complex required for mitotic progression and cytokinesis. The BCR(KLHL9-KLHL13) E3 ubiquitin ligase complex mediates the ubiquitination of AURKB and controls the dynamic behavior of AURKB on mitotic chromosomes and thereby coordinates faithful mitotic progression and completion of cytokinesis. This chain is Kelch-like protein 13 (KLHL13), found in Gallus gallus (Chicken).